A 445-amino-acid polypeptide reads, in one-letter code: Lipoyl synthase, mitochondrial (445 aa).

The N-terminal 40 residues, 1–40 (MRPGSWRVITHYGFTGPIQRLQAPLRRSLARAAALSTRSY), are a transit peptide targeting the mitochondrion. Residues 42-71 (TIPSAPSSQPTSQESSPAASASASASAPAT) show a composition bias toward low complexity. A disordered region spans residues 42–77 (TIPSAPSSQPTSQESSPAASASASASAPATKPRPTY). The [4Fe-4S] cluster site is built by Cys157, Cys162, Cys168, Cys188, Cys192, Cys195, and Ser405. The region spanning 171–394 (GSNKAAATAT…RQRALDMGFL (224 aa)) is the Radical SAM core domain.

This sequence belongs to the radical SAM superfamily. Lipoyl synthase family. The cofactor is [4Fe-4S] cluster.

Its subcellular location is the mitochondrion. The catalysed reaction is [[Fe-S] cluster scaffold protein carrying a second [4Fe-4S](2+) cluster] + N(6)-octanoyl-L-lysyl-[protein] + 2 oxidized [2Fe-2S]-[ferredoxin] + 2 S-adenosyl-L-methionine + 4 H(+) = [[Fe-S] cluster scaffold protein] + N(6)-[(R)-dihydrolipoyl]-L-lysyl-[protein] + 4 Fe(3+) + 2 hydrogen sulfide + 2 5'-deoxyadenosine + 2 L-methionine + 2 reduced [2Fe-2S]-[ferredoxin]. The protein operates within protein modification; protein lipoylation via endogenous pathway; protein N(6)-(lipoyl)lysine from octanoyl-[acyl-carrier-protein]: step 2/2. In terms of biological role, catalyzes the radical-mediated insertion of two sulfur atoms into the C-6 and C-8 positions of the octanoyl moiety bound to the lipoyl domains of lipoate-dependent enzymes, thereby converting the octanoylated domains into lipoylated derivatives. The protein is Lipoyl synthase, mitochondrial of Sordaria macrospora (strain ATCC MYA-333 / DSM 997 / K(L3346) / K-hell).